The following is a 201-amino-acid chain: Transcriptional regulator GfcR (201 aa).

It belongs to the purine/pyrimidine phosphoribosyltransferase family. GfcR subfamily.

The chain is Transcriptional regulator GfcR from Methanobrevibacter smithii (strain ATCC 35061 / DSM 861 / OCM 144 / PS).